The following is a 292-amino-acid chain: Troponin I (292 aa).

The residue at position 1 (serine 1) is an N-acetylserine. The tract at residues 1–149 (SSLEERRAAR…GLGGLSPEKK (149 aa)) is disordered. Positions 46 to 55 (YSAPAEPAYD) are enriched in low complexity. Residues 58-134 (AENRRRQQQE…EARRMAEEQK (77 aa)) show a composition bias toward basic and acidic residues. Residues 237-250 (DTKGKFVKPVLRKV) form an actin-binding region. The disordered stretch occupies residues 255-292 (SKLDKIQRKEAKKSDFRDNLKSSREHEADKEGGEGENE).

Belongs to the troponin I family.

Its function is as follows. Troponin I is the inhibitory subunit of troponin, the thin filament regulatory complex which confers calcium-sensitivity to striated muscle actomyosin ATPase activity. This chain is Troponin I, found in Chlamys nipponensis akazara (Akazara scallop).